Consider the following 551-residue polypeptide: HTH-type transcriptional regulator SgrR (551 aa).

Residues 1–116 form the HTH marR-type domain; that stretch reads MPSARLQQQF…LVSHLGRSFR (116 aa). The segment at residues 26–49 is a DNA-binding region (H-T-H motif); the sequence is LNELAALLSCSRRHMRTLLNTMQD. A solute-binding region spans residues 163–492; sequence ELEADIAHHW…IDWQADAARW (330 aa).

Activates the small RNA gene sgrS under glucose-phosphate stress conditions as well as yfdZ. Represses its own transcription under both stress and non-stress conditions. Might act as a sensor of the intracellular accumulation of phosphoglucose by binding these molecules in its C-terminal solute-binding domain. The chain is HTH-type transcriptional regulator SgrR from Escherichia coli O1:K1 / APEC.